Here is a 511-residue protein sequence, read N- to C-terminus: MKHVPIVVLDFGSQYTQIIARKLREAGVYSEIVPYNEPIGDIVARTPKGIILSGGPASVYAVDAYHPDTTIFELGLPILGICYGMQLISQHFGGSVIPASHHEYGKAKLQFEVENPIFKDTQDGQIVWMSHGDRVENIPAGFEKIATSENSPFAAIADINRNIYAFQFHPEVYHSQEGSKLLKNFAKHICGCESTWNMGSFAKEQIKQIQDKVGNKKVLCAVSGGVDSSVVATLLAEAIGEQVIPVFVDNGLLRANEREQVETMFKSRGVNLITVDASETFLSKLAGVTDPEKKRKIIGETFIEVFDVEAKKHSGIEFLAQGTLYTDVIESVSVKGPSKTIKSHHNVGGLPDWMKFELIEPLREIFKDEVRALGLELGLPKSMISRHPFPGPGLAIRIMGEVNKPDLELLRKADVIMLDVLHSTGYYDKTWQAFTVLLNVKSVGVMGDNRTYDNTVCVRIVDATDGMTATFAHIPHEILETISRRIINEVDGINRVVYDISSKPPATIEWE.

A Glutamine amidotransferase type-1 domain is found at 5–195 (PIVVLDFGSQ…AKHICGCEST (191 aa)). Catalysis depends on cysteine 82, which acts as the Nucleophile. Active-site residues include histidine 169 and glutamate 171. A GMPS ATP-PPase domain is found at 196–386 (WNMGSFAKEQ…LGLPKSMISR (191 aa)). Position 223–229 (223–229 (SGGVDSS)) interacts with ATP.

Homodimer.

The enzyme catalyses XMP + L-glutamine + ATP + H2O = GMP + L-glutamate + AMP + diphosphate + 2 H(+). It functions in the pathway purine metabolism; GMP biosynthesis; GMP from XMP (L-Gln route): step 1/1. Catalyzes the synthesis of GMP from XMP. The chain is GMP synthase [glutamine-hydrolyzing] from Aliarcobacter butzleri (strain RM4018) (Arcobacter butzleri).